A 2339-amino-acid chain; its full sequence is Voltage-dependent N-type calcium channel subunit alpha-1B (2339 aa).

A disordered region spans residues 1-37 (MVRFGDELGGRYGGPGGGERARGGGAGGAGGPGPGGL). At 1–90 (MVRFGDELGG…DNVVRKYAKR (90 aa)) the chain is on the cytoplasmic side. Residues 10–37 (GRYGGPGGGERARGGGAGGAGGPGPGGL) show a composition bias toward gly residues. R22 bears the Omega-N-methylarginine mark. The stretch at 82–359 (NVVRKYAKRI…LVLGVLSGEF (278 aa)) is one I repeat. The chain crosses the membrane as a helical span at residues 91-114 (ITEWPPFEYMILATIIANCIVLAL). The Extracellular portion of the chain corresponds to 115-131 (EQHLPDGDKTPMSERLD). The chain crosses the membrane as a helical span at residues 132 to 152 (DTEPYFIGIFCFEAGIKIIAL). Topologically, residues 153-163 (GFVFHKGSYLR) are cytoplasmic. A helical membrane pass occupies residues 164-182 (NGWNVMDFVVVLTGILATA). The Extracellular portion of the chain corresponds to 183-187 (GTDFD). A helical transmembrane segment spans residues 188–211 (LRTLRAVRVLRPLKLVSGIPSLQV). The Cytoplasmic segment spans residues 212 to 221 (VLKSIMKAMV). A helical membrane pass occupies residues 222-244 (PLLQIGLLLFFAILMFAIIGLEF). The Extracellular portion of the chain corresponds to 245-331 (YMGKFHKACF…NTNDAAGNTW (87 aa)). N-linked (GlcNAc...) asparagine glycosylation occurs at N256. Residues 332–356 (NWLYFIPLIIIGSFFMLNLVLGVLS) traverse the membrane as a helical segment. Topologically, residues 357–482 (GEFAKERERV…FFIRRMVKAQ (126 aa)) are cytoplasmic. Positions 379–396 (QQIERELNGYLEWIFKAE) are binding to the beta subunit. At S411 the chain carries Phosphoserine. Position 451–458 (451–458 (ASLKSGKT)) interacts with ATP. An II repeat occupies 468–712 (EKMFRFFIRR…VFLAIAVDNL (245 aa)). The chain crosses the membrane as a helical span at residues 483–501 (SFYWVVLCVVALNTLCVAM). The Extracellular portion of the chain corresponds to 502 to 511 (VHYNQPRRLT). Residues 512–534 (TTLYFAEFVFLGLFLTEMSLKMY) form a helical membrane-spanning segment. At 535–544 (GLGPRSYFRS) the chain is on the cytoplasmic side. S544 contacts a 1,2-diacyl-sn-glycero-3-phospho-(1D-myo-inositol-4,5-bisphosphate). The helical transmembrane segment at 545–566 (SFNCFDFGVIVGSVFEVVWAAI) threads the bilayer. Residues 567–573 (KPGSSFG) are Extracellular-facing. A helical membrane pass occupies residues 574-586 (ISVLRALRLLRIF). Positions 584 and 587 each coordinate a 1,2-diacyl-sn-glycero-3-phospho-(1D-myo-inositol-4,5-bisphosphate). Over 587–604 (KVTKYWSSLRNLVVSLLN) the chain is Cytoplasmic. The helical transmembrane segment at 605-630 (SMKSIISLLFLLFLFIVVFALLGMQL) threads the bilayer. Residues 631–682 (FGGQFNFQDETPTTNFDTFPAAILTVFQILTGEDWNAVMYHGIESQGGVSKG) are Extracellular-facing. The helical transmembrane segment at 683-709 (MFSSFYFIVLTLFGNYTLLNVFLAIAV) threads the bilayer. The Cytoplasmic segment spans residues 710 to 1151 (DNLANAQELT…FCHYIVTMRY (442 aa)). Phosphoserine is present on residues S745, S748, and S783. Composition is skewed to basic and acidic residues over residues 816-826 (PLVVELGRDGA), 857-886 (KDKTPAAGDQDRAEAPKAESGEPGAREERP), 922-932 (GSPEEAAEREP), and 965-976 (GPREAESGEEPA). Disordered stretches follow at residues 816-1038 (PLVV…VTVG) and 1054-1076 (QPEDADNQRNVTRMGSQPPDPNT). The segment covering 977–986 (RRHRARHKAQ) has biased composition (basic residues). Over residues 990 to 1029 (EAVEKETTEKEATEKEAEIVEADKEKELRNHQPREPHCDL) the composition is skewed to basic and acidic residues. Residue S1069 is modified to Phosphoserine. The stretch at 1137–1419 (NLLRRFCHYI…IFVALIIITF (283 aa)) is one III repeat. Residues 1152–1170 (FEVVILVVIALSSIALAAE) form a helical membrane-spanning segment. Residues 1171–1178 (DPVRTDSP) lie on the Extracellular side of the membrane. The helical transmembrane segment at 1179–1203 (RNNALKYLDYIFTGVFTFEMVIKMI) threads the bilayer. Topologically, residues 1204–1217 (DLGLLLHPGAYFRD) are cytoplasmic. A helical transmembrane segment spans residues 1218 to 1238 (LWNILDFIVVSGALVAFAFSG). At 1239–1244 (SKGKDI) the chain is on the extracellular side. The helical transmembrane segment at 1245-1265 (NTIKSLRVLRVLRPLKTIKRL) threads the bilayer. Over 1266–1283 (PKLKAVFDCVVNSLKNVL) the chain is Cytoplasmic. A helical membrane pass occupies residues 1284–1303 (NILIVYMLFMFIFAVIAVQL). Topologically, residues 1304-1390 (FKGKFFYCTD…EQGPSPGYRM (87 aa)) are extracellular. The chain crosses the membrane as a helical span at residues 1391–1416 (ELSIFYVVYFVVFPFFFVNIFVALII). The Cytoplasmic segment spans residues 1417 to 1471 (ITFQEQGDKVMSECSLEKNERACIDFAISAKPLTRYMPQNRQSFQYKTWTFVVSP). Residues 1456 to 1711 (NRQSFQYKTW…LFVAVIMDNF (256 aa)) form an IV repeat. The helical transmembrane segment at 1472–1490 (PFEYFIMAMIALNTVVLMM) threads the bilayer. Residues 1491 to 1498 (KFYDAPYE) lie on the Extracellular side of the membrane. A helical transmembrane segment spans residues 1499–1523 (YELMLKCLNIVFTSMFSMECVLKII). Topologically, residues 1524–1533 (AFGVLNYFRD) are cytoplasmic. The chain crosses the membrane as a helical span at residues 1534-1555 (AWNVFDFVTVLGSITDILVTEI). The Extracellular portion of the chain corresponds to 1556–1563 (AETNNFIN). N1563 is a glycosylation site (N-linked (GlcNAc...) asparagine). A helical membrane pass occupies residues 1564 to 1582 (LSFLRLFRAARLIKLLRQG). The Cytoplasmic segment spans residues 1583–1601 (YTIRILLWTFVQSFKALPY). The chain crosses the membrane as a helical span at residues 1602 to 1621 (VCLLIAMLFFIYAIIGMQVF). The Extracellular segment spans residues 1622 to 1683 (GNIALDDDTS…ANATECGSDF (62 aa)). N1675 carries an N-linked (GlcNAc...) asparagine glycan. The helical transmembrane segment at 1684 to 1707 (AYFYFVSFIFLCSFLMLNLFVAVI) threads the bilayer. Over 1708–2339 (MDNFEYLTRD…YHHPDQDHWC (632 aa)) the chain is Cytoplasmic. The EF-hand domain maps to 1724–1759 (HHLDEFIRVWAEYDPAACGRISYNDMFEMLKHMSPP). Ca(2+) is bound by residues D1737, R1743, and D1748. A compositionally biased stretch (polar residues) spans 1916 to 1931 (SSTSLSNGGAIQNQES). 2 disordered regions span residues 1916–1968 (SSTS…VGRS) and 1981–2206 (TRRG…YKTA). Positions 1946–1960 (DAPHEARPPLERGHS) are enriched in basic and acidic residues. Residues 2049-2063 (SHHHHHRCHRRRDRK) are compositionally biased toward basic residues. Phosphoserine is present on S2066. Residues 2098 to 2116 (CRRERERRQERGRSQERRQ) show a composition bias toward basic and acidic residues. Residues 2143-2153 (PSLSSHPTSPT) are compositionally biased toward low complexity. The span at 2164–2180 (GSGSVNGSPLLSTSGAS) shows a compositional bias: polar residues. A phosphoserine mark is found at S2224, S2233, and S2256.

This sequence belongs to the calcium channel alpha-1 subunit (TC 1.A.1.11) family. CACNA1B subfamily. In terms of assembly, multisubunit complex consisting of alpha-1, alpha-2, beta and delta subunits in a 1:1:1:1 ratio. The channel activity is directed by the pore-forming and voltage-sensitive alpha-1 subunit. In many cases, this subunit is sufficient to generate voltage-sensitive calcium channel activity. The auxiliary subunits beta and alpha-2/delta linked by a disulfide bridge regulate the channel activity. Interacts with RIMS1. Interacts with FMR1 (via C-terminus); this interaction induces a decrease in the number of presynaptic functional CACNA1B channels at the cell surface. In terms of processing, phosphorylated in vitro by CaM-kinase II, PKA, PKC and CGPK. As to expression, isoform Alpha-1b-1 and isoform Alpha-1b-2 are expressed in the central nervous system, but not in skeletal muscle or aorta. Expressed in the cerebral white matter, cortex, hippocampus, basal ganglia, and cerebellum.

It is found in the membrane. It carries out the reaction Ca(2+)(in) = Ca(2+)(out). With respect to regulation, is specifically blocked by omega-conotoxin GVIA. Is specifically blocked by omega-conotoxin MVIIA (ziconotide). Is insensitive to dihydropyridines (DHP). Its activity is regulated as follows. Is specifically blocked by omega-conotoxin MVIIA (ziconotide). Is insensitive to dihydropyridines (DHP). In terms of biological role, voltage-sensitive calcium channels (VSCC) mediate the entry of calcium ions into excitable cells and are also involved in a variety of calcium-dependent processes, including muscle contraction, hormone or neurotransmitter release, gene expression, cell motility, cell division and cell death. This alpha-1B subunit gives rise to N-type calcium currents. N-type calcium channels belong to the 'high-voltage activated' (HVA) group. They are involved in pain signaling. Calcium channels containing alpha-1B subunit may play a role in directed migration of immature neurons. Mediates Ca(2+) release probability at hippocampal neuronal soma and synaptic terminals. Its function is as follows. Voltage-sensitive calcium channels (VSCC) mediate the entry of calcium ions into excitable cells and are also involved in a variety of calcium-dependent processes, including muscle contraction, hormone or neurotransmitter release, gene expression, cell motility, cell division and cell death. This alpha-1B subunit gives rise to N-type calcium currents. This is Voltage-dependent N-type calcium channel subunit alpha-1B (CACNA1B) from Homo sapiens (Human).